The sequence spans 480 residues: Cyclin L homolog cyl-1 (480 aa).

Residues 25–58 form a disordered region; the sequence is PKEQNGNVEPKKEEDEKFESTYKQNENTQITPSS. A compositionally biased stretch (basic and acidic residues) spans 33–44; the sequence is EPKKEEDEKFES. The span at 45–58 shows a compositional bias: polar residues; it reads TYKQNENTQITPSS. A Cyclin N-terminal domain is found at 91 to 230; it reads PSLVDGLSKE…RRILATLGFV (140 aa). The disordered stretch occupies residues 368–480; it reads KMAPDGEKST…ESSTPPRSRR (113 aa). Basic and acidic residues-rich tracts occupy residues 384–409 and 418–442; these read KDSR…GKKE and NDRD…DEKK. A compositionally biased stretch (basic residues) spans 443 to 453; it reads DRRKRTRSRSR. Positions 454 to 472 are enriched in basic and acidic residues; it reads DRKDKNRNRDVGKRYRKES.

The protein belongs to the cyclin family.

Its function is as follows. Involved in pre-mRNA splicing. Functions in association with cyclin-dependent kinases (CDKs). Involved in induction of expression of heat shock protein hsp-16.2 in response to heat shock. Plays a role in male tail development, perhaps acting together with cell cycle regulators cdc-25.2, cdk-1, cyb-3, and cyd-1. The polypeptide is Cyclin L homolog cyl-1 (Caenorhabditis elegans).